The primary structure comprises 228 residues: Phosphoglycolate phosphatase (228 aa).

Residue aspartate 9 is the Nucleophile of the active site. Residues aspartate 9 and aspartate 11 each coordinate Mg(2+). Residue lysine 151 coordinates substrate. 2 residues coordinate Mg(2+): aspartate 174 and aspartate 178.

It belongs to the archaeal SPP-like hydrolase family. The cofactor is Mg(2+).

The catalysed reaction is 2-phosphoglycolate + H2O = glycolate + phosphate. Its function is as follows. Catalyzes the dephosphorylation of 2-phosphoglycolate. The chain is Phosphoglycolate phosphatase from Pyrobaculum aerophilum (strain ATCC 51768 / DSM 7523 / JCM 9630 / CIP 104966 / NBRC 100827 / IM2).